The sequence spans 414 residues: FAD-dependent monooxygenase adaC (414 aa).

FAD is bound by residues Glu-32, Ala-43, Arg-115, Asp-325, and Gly-338.

This sequence belongs to the paxM FAD-dependent monooxygenase family. Requires FAD as cofactor.

It carries out the reaction 3-(2,4-dioxopentyl)-3,6,8,9-tetrahydroxy-1-oxo-1,2,3,4-tetrahydroanthracene-2-carboxyl-[ACP] + NADPH + O2 + H(+) = 3-(2,4-dioxopentyl)-2,3,6,8,9-pentahydroxy-1-oxo-1,2,3,4-tetrahydroanthracene-2-carboxyl-[ACP] + NADP(+) + H2O. It functions in the pathway secondary metabolite biosynthesis. In terms of biological role, FAD-dependent monooxygenase; part of the gene cluster that mediates the biosynthesis of the linear tetracyclic TAN-1612 neuropeptide Y receptor antagonist. The decaketide backbone of TAN-1612 is synthesized by the non-reducing polyketide synthase adaA via condensation of one acetyl-CoA starter unit with 9 malonyl-CoA units. The FAD-dependent monooxygenase adaC then performs hydroxylation at C2 while the polaketide chain is still attached to the NRPKS adaA. The alpha-hydroxylation step at C2 appears to be crucial for the following C18-C1 Claisen cyclization and release of the C9-hydroxyl version of TAN-1612 from the NRPKS adaA, two steps performed by the lactamase-like protein adaB. Finally, the O-methyltransferase adaD performs the C9 O-methylation to complete the biosynthesis of TAN-1612. This is FAD-dependent monooxygenase adaC from Aspergillus niger (strain ATCC MYA-4892 / CBS 513.88 / FGSC A1513).